The following is a 70-amino-acid chain: MNLIAAAIAIGLSALGAGIGNGLIVSRTVEGVARQPEARGQLMGIMFIGVGLVEALPIIGVVIAFMTFAG.

Helical transmembrane passes span 4-24 (IAAAIAIGLSALGAGIGNGLI) and 45-65 (IMFIGVGLVEALPIIGVVIAF).

This sequence belongs to the ATPase C chain family. In terms of assembly, F-type ATPases have 2 components, F(1) - the catalytic core - and F(0) - the membrane proton channel. F(1) has five subunits: alpha(3), beta(3), gamma(1), delta(1), epsilon(1). F(0) has three main subunits: a(1), b(2) and c(10-14). The alpha and beta chains form an alternating ring which encloses part of the gamma chain. F(1) is attached to F(0) by a central stalk formed by the gamma and epsilon chains, while a peripheral stalk is formed by the delta and b chains.

Its subcellular location is the cell membrane. In terms of biological role, f(1)F(0) ATP synthase produces ATP from ADP in the presence of a proton or sodium gradient. F-type ATPases consist of two structural domains, F(1) containing the extramembraneous catalytic core and F(0) containing the membrane proton channel, linked together by a central stalk and a peripheral stalk. During catalysis, ATP synthesis in the catalytic domain of F(1) is coupled via a rotary mechanism of the central stalk subunits to proton translocation. Functionally, key component of the F(0) channel; it plays a direct role in translocation across the membrane. A homomeric c-ring of between 10-14 subunits forms the central stalk rotor element with the F(1) delta and epsilon subunits. In Staphylococcus aureus (strain Mu3 / ATCC 700698), this protein is ATP synthase subunit c.